Reading from the N-terminus, the 327-residue chain is Probable cell division protein WhiA (327 aa).

The segment at residues 275–308 (SLEELGRLADPQMTKDAVAGRIRRLLTMADKRAE) is a DNA-binding region (H-T-H motif).

The protein belongs to the WhiA family.

Functionally, involved in cell division and chromosome segregation. The chain is Probable cell division protein WhiA from Corynebacterium glutamicum (strain R).